We begin with the raw amino-acid sequence, 367 residues long: FAD synthetase 2, chloroplastic (367 aa).

A chloroplast-targeting transit peptide spans 1 to 57 (MLCGGSRVLQHLSDHNHHNSIGLGLGFCGAKIVQLSSFFLRPSQAMAKSHHFSRKLR).

Requires Mg(2+) as cofactor.

The protein localises to the plastid. Its subcellular location is the chloroplast. The enzyme catalyses FMN + ATP + H(+) = FAD + diphosphate. It functions in the pathway cofactor biosynthesis; FAD biosynthesis; FAD from FMN: step 1/1. Its function is as follows. Catalyzes the adenylation of flavin mononucleotide (FMN) to form flavin adenine dinucleotide (FAD) coenzyme. The polypeptide is FAD synthetase 2, chloroplastic (Arabidopsis thaliana (Mouse-ear cress)).